Here is a 403-residue protein sequence, read N- to C-terminus: Dynactin subunit 2-B (403 aa).

Residues 1–26 (MADPKYADLPGIARNEPDLYETSDLP) form a disordered region. Residues 99–132 (PQQKYQRLLHEVQELTQEVEKTQSTLKESATEEK) adopt a coiled-coil conformation. Positions 183–206 (AAKTRKDPEGKSSAKGPGPDNENL) are disordered. Positions 184 to 194 (AKTRKDPEGKS) are enriched in basic and acidic residues. The stretch at 381-401 (KENLATVEDNFSSIDGRIKKL) forms a coiled coil.

This sequence belongs to the dynactin subunit 2 family. Subunit of dynactin, a multiprotein complex part of a tripartite complex with dynein and a adapter, such as BICDL1, BICD2 or HOOK3. The dynactin complex is built around ACTR1A/ACTB filament and consists of an actin-related filament composed of a shoulder domain, a pointed end and a barbed end. Its length is defined by its flexible shoulder domain. The soulder is composed of 2 DCTN1 subunits, 4 DCTN2 and 2 DCTN3.

It localises to the cytoplasm. The protein localises to the cytoskeleton. The protein resides in the microtubule organizing center. Its subcellular location is the centrosome. It is found in the membrane. Functionally, part of the dynactin complex that activates the molecular motor dynein for ultra-processive transport along microtubules. In the dynactin soulder domain, binds the ACTR1A filament and acts as a molecular ruler to determine the length. Modulates cytoplasmic dynein binding to an organelle, and plays a role in prometaphase chromosome alignment and spindle organization during mitosis. Involved in anchoring microtubules to centrosomes. The polypeptide is Dynactin subunit 2-B (dctn2-b) (Xenopus laevis (African clawed frog)).